The primary structure comprises 241 residues: MLSAYYNDPFLADFCLGNIPLRLASRQSSLAVLQAHECLRKLQIFFPRLWGQIITTTTQGDLDQETPLCAVENTGFFTDDVDFLVQSGQCDLGIHSAKDLPENPKATVVSITASIDPRDILVFHEKYLSIPLPRRLRIGSSSVRRKELLSLLYPSAIITDIRGTIQTRLKLLEEKNFDAIVMANAAVSRLGLRLPCTKILPPPYHPLQGRLAITASRHIRSWRGLFLTCGITEDVEIMCFS.

It belongs to the HMBS family.

The catalysed reaction is 4 porphobilinogen + H2O = hydroxymethylbilane + 4 NH4(+). It functions in the pathway porphyrin-containing compound metabolism; protoporphyrin-IX biosynthesis; coproporphyrinogen-III from 5-aminolevulinate: step 2/4. Tetrapolymerization of the monopyrrole PBG into the hydroxymethylbilane pre-uroporphyrinogen in several discrete steps. The polypeptide is Probable porphobilinogen deaminase (hemC) (Chlamydia trachomatis serovar D (strain ATCC VR-885 / DSM 19411 / UW-3/Cx)).